The primary structure comprises 505 residues: Membrane-bound O-acyltransferase GUP1 (505 aa).

Topologically, residues 1-217 (MFKAAMDASN…VAPIPLTDYN (217 aa)) are extracellular. Residues 218-238 (FVNYMAYITYAPLFIAGPIIT) traverse the membrane as a helical segment. The Cytoplasmic portion of the chain corresponds to 239 to 266 (FNDYIYQSDYKAMSSVKDYKRTFIYFLR). A helical membrane pass occupies residues 267–287 (FAFCILVMEFLLHFMYVVAVS). Topologically, residues 288–296 (KTKAWEGDT) are extracellular. A helical transmembrane segment spans residues 297–317 (PFQLSMLGLFNLNIIWLKLLI). Topologically, residues 318-377 (PWRLFRLWSLIDGIDPPENMIRCMDNNFSTLAFWRAWHRSYNRWIIRYIYIPLGGGGKYR) are cytoplasmic. Helical transmembrane passes span 378–398 (ILNS…ELKL) and 399–419 (LMWG…TAIF). The active site involves His-392. The Cytoplasmic portion of the chain corresponds to 420–430 (KNYQHEPWYRH). The helical transmembrane segment at 431–451 (VCALGAVINIWMMMLANLFGF) threads the bilayer. The Extracellular segment spans residues 452 to 464 (CMGKDGTMSLIKT). A helical membrane pass occupies residues 465 to 485 (LFTTAVGLRFLFLSLGALFVG). The Cytoplasmic portion of the chain corresponds to 486 to 505 (SQVMFELREAEKRRGVNVKC).

This sequence belongs to the membrane-bound acyltransferase family.

It localises to the cell membrane. The protein resides in the endoplasmic reticulum membrane. The protein localises to the mitochondrion membrane. Membrane-bound O-acyltransferase involved in the remodeling of glycosylphosphatidylinositol (GPI) anchors. Acts only on GPI-anchored proteins, but not on free GPI lipids. Also involved in lipid metabolism, having profound effects on sphingolipid-sterol-ordered domains integrity and assembly. Involved in cell integrity and apoptosis. This is Membrane-bound O-acyltransferase GUP1 (GUP1) from Millerozyma farinosa (Yeast).